The sequence spans 342 residues: tRNA N6-adenosine threonylcarbamoyltransferase (342 aa).

Fe cation-binding residues include histidine 111 and histidine 115. Substrate-binding positions include 133–137, aspartate 166, glycine 179, aspartate 183, and asparagine 273; that span reads AVSGG. Aspartate 301 is a Fe cation binding site.

The protein belongs to the KAE1 / TsaD family. The cofactor is Fe(2+).

The protein resides in the cytoplasm. It carries out the reaction L-threonylcarbamoyladenylate + adenosine(37) in tRNA = N(6)-L-threonylcarbamoyladenosine(37) in tRNA + AMP + H(+). Required for the formation of a threonylcarbamoyl group on adenosine at position 37 (t(6)A37) in tRNAs that read codons beginning with adenine. Is involved in the transfer of the threonylcarbamoyl moiety of threonylcarbamoyl-AMP (TC-AMP) to the N6 group of A37, together with TsaE and TsaB. TsaD likely plays a direct catalytic role in this reaction. The sequence is that of tRNA N6-adenosine threonylcarbamoyltransferase from Syntrophotalea carbinolica (strain DSM 2380 / NBRC 103641 / GraBd1) (Pelobacter carbinolicus).